We begin with the raw amino-acid sequence, 639 residues long: Eukaryotic translation initiation factor 2-alpha kinase 2 (639 aa).

The region spanning 171 to 588 (FEEYSLLGRG…LEVLNCGLLL (418 aa)) is the Protein kinase domain. ATP-binding positions include 177 to 185 (LGRGGFGSV) and lysine 200. The segment covering 298-320 (ISTSRKSSYSSTTESSNFENLES) has biased composition (low complexity). The segment at 298-322 (ISTSRKSSYSSTTESSNFENLESPR) is disordered. The active-site Proton acceptor is the aspartate 417.

It belongs to the protein kinase superfamily. Ser/Thr protein kinase family. GCN2 subfamily. Autophosphorylated.

The enzyme catalyses L-seryl-[protein] + ATP = O-phospho-L-seryl-[protein] + ADP + H(+). The catalysed reaction is L-threonyl-[protein] + ATP = O-phospho-L-threonyl-[protein] + ADP + H(+). Functionally, mediates down-regulation of protein synthesis in response to stress conditions by the phosphorylation of the alpha subunit of eIF-2 (tif211) on 'Ser-52'. Protein synthesis is inhibited at the level of initiation. Activity is inhibited in the presence of heme. The sequence is that of Eukaryotic translation initiation factor 2-alpha kinase 2 (hri2) from Schizosaccharomyces pombe (strain 972 / ATCC 24843) (Fission yeast).